The chain runs to 592 residues: A-type ATP synthase subunit A (592 aa).

ATP is bound at residue 233–240 (GPFGSGKT).

Belongs to the ATPase alpha/beta chains family. In terms of assembly, has multiple subunits with at least A(3), B(3), C, D, E, F, H, I and proteolipid K(x).

It localises to the cell membrane. The catalysed reaction is ATP + H2O + 4 H(+)(in) = ADP + phosphate + 5 H(+)(out). Component of the A-type ATP synthase that produces ATP from ADP in the presence of a proton gradient across the membrane. The A chain is the catalytic subunit. In Saccharolobus solfataricus (strain ATCC 35092 / DSM 1617 / JCM 11322 / P2) (Sulfolobus solfataricus), this protein is A-type ATP synthase subunit A.